The chain runs to 1369 residues: Xanthine dehydrogenase (1369 aa).

Residues 20–106 form the 2Fe-2S ferredoxin-type domain; the sequence is GEAVVYVNGV…GMHIITVEGI (87 aa). 8 residues coordinate [2Fe-2S] cluster: Cys58, Cys63, Cys66, Cys88, Cys128, Cys131, Cys164, and Cys166. Positions 265 to 450 constitute an FAD-binding PCMH-type domain; that stretch reads NGFNGIRWYR…LSVILPWTRP (186 aa). Residues 293 to 300, Phe373, 383 to 387, Asp396, Leu440, and Lys458 each bind FAD; these read LIIGNSEV and SVGGN. Mo-molybdopterin-binding residues include Gln804 and Phe835. Substrate is bound by residues Glu839 and Arg917. Mo-molybdopterin is bound at residue Arg949. Substrate-binding residues include Phe951 and Thr1047. Ala1116 lines the Mo-molybdopterin pocket. Glu1305 acts as the Proton acceptor in catalysis.

This sequence belongs to the xanthine dehydrogenase family. In terms of assembly, homodimer. [2Fe-2S] cluster serves as cofactor. The cofactor is FAD. Requires Mo-molybdopterin as cofactor.

It catalyses the reaction xanthine + NAD(+) + H2O = urate + NADH + H(+). The catalysed reaction is hypoxanthine + NAD(+) + H2O = xanthine + NADH + H(+). Key enzyme involved in purine catabolism. Catalyzes the oxidation of hypoxanthine to xanthine and the oxidation of xanthine to urate. This Oryza sativa subsp. japonica (Rice) protein is Xanthine dehydrogenase (XDH).